The primary structure comprises 623 residues: Zinc finger protein 143 (623 aa).

C2H2-type zinc fingers lie at residues 230–254 (FRCEHEGCGKLYTTAHHLKVHERSH), 260–284 (YICDHLGCGKKFATGYGLKSHVRTH), 290–314 (YRCQELNCLKSFKTSGDLQKHTRTH), 320–344 (FKCPFEGCGRSFTTSNIRKVHIRTH), 350–374 (YYCAEPNCGRAFASATNYKNHMRIH), 380–404 (YVCTVPGCDKRFTEYSSLYKHHVVH), and 410–433 (YNCNHCGKTYKQISTLAMHKRTAH).

It belongs to the GLI C2H2-type zinc-finger protein family.

The protein resides in the nucleus. In terms of biological role, transcriptional activator. Activates the gene for selenocysteine tRNA (tRNAsec). Binds to the activator element (AE) motif of the selenocysteine tRNA gene promoter. The chain is Zinc finger protein 143 (znf143) from Danio rerio (Zebrafish).